The chain runs to 791 residues: mRNA 3'-end-processing protein RNA14 (791 aa).

HAT repeat units lie at residues 44–76 (DNQE…YELN), 78–112 (DEKE…GVTD), 119–154 (KARG…FLQS), 165–198 (QKID…WENE), 231–263 (KSLK…LEKE), and 273–305 (VNDK…YLLV). Basic and acidic residues predominate over residues 379-388 (IDPATDKDNI). 2 disordered regions span residues 379–449 (IDPA…APSS) and 725–745 (QKTR…KPEE). Residues 389–411 (QEDDDDNEEEEEEENDNDNDNDN) show a composition bias toward acidic residues. A compositionally biased stretch (low complexity) spans 427 to 442 (NPNGGQNGSNSENNGE).

The protein resides in the nucleus. It is found in the cytoplasm. Functionally, component of the cleavage factor IA (CFIA) complex, which is involved in the endonucleolytic cleavage during polyadenylation-dependent pre-mRNA 3'-end formation. The protein is mRNA 3'-end-processing protein RNA14 (RNA14) of Candida albicans (strain SC5314 / ATCC MYA-2876) (Yeast).